The sequence spans 214 residues: LexA repressor (214 aa).

The segment at residues 26–46 (VREIGEAVGLSSSSTVHSYLK) is a DNA-binding region (H-T-H motif). Active-site for autocatalytic cleavage activity residues include Ser138 and Lys175.

The protein belongs to the peptidase S24 family. In terms of assembly, homodimer.

The catalysed reaction is Hydrolysis of Ala-|-Gly bond in repressor LexA.. Functionally, represses a number of genes involved in the response to DNA damage (SOS response), including recA and lexA. In the presence of single-stranded DNA, RecA interacts with LexA causing an autocatalytic cleavage which disrupts the DNA-binding part of LexA, leading to derepression of the SOS regulon and eventually DNA repair. In Desulforamulus reducens (strain ATCC BAA-1160 / DSM 100696 / MI-1) (Desulfotomaculum reducens), this protein is LexA repressor.